Here is a 178-residue protein sequence, read N- to C-terminus: CDP-archaeol synthase (178 aa).

Transmembrane regions (helical) follow at residues 3 to 23 (IIYL…ANAT), 55 to 75 (TFFG…IFNL), 91 to 111 (GIVG…GSFI), 125 to 145 (ILDQ…FAPV), and 149 to 169 (MGIF…IIAY).

Belongs to the CDP-archaeol synthase family. The cofactor is Mg(2+).

The protein resides in the cell membrane. It catalyses the reaction 2,3-bis-O-(geranylgeranyl)-sn-glycerol 1-phosphate + CTP + H(+) = CDP-2,3-bis-O-(geranylgeranyl)-sn-glycerol + diphosphate. The protein operates within membrane lipid metabolism; glycerophospholipid metabolism. In terms of biological role, catalyzes the formation of CDP-2,3-bis-(O-geranylgeranyl)-sn-glycerol (CDP-archaeol) from 2,3-bis-(O-geranylgeranyl)-sn-glycerol 1-phosphate (DGGGP) and CTP. This reaction is the third ether-bond-formation step in the biosynthesis of archaeal membrane lipids. The polypeptide is CDP-archaeol synthase (Methanococcus aeolicus (strain ATCC BAA-1280 / DSM 17508 / OCM 812 / Nankai-3)).